A 186-amino-acid chain; its full sequence is ATP-dependent protease subunit HslV (186 aa).

Thr-14 is a catalytic residue. Ala-168, Cys-171, and Thr-174 together coordinate Na(+).

The protein belongs to the peptidase T1B family. HslV subfamily. A double ring-shaped homohexamer of HslV is capped on each side by a ring-shaped HslU homohexamer. The assembly of the HslU/HslV complex is dependent on binding of ATP.

It is found in the cytoplasm. The catalysed reaction is ATP-dependent cleavage of peptide bonds with broad specificity.. Its activity is regulated as follows. Allosterically activated by HslU binding. Protease subunit of a proteasome-like degradation complex believed to be a general protein degrading machinery. The polypeptide is ATP-dependent protease subunit HslV (Bradyrhizobium sp. (strain BTAi1 / ATCC BAA-1182)).